A 280-amino-acid polypeptide reads, in one-letter code: Acetylglutamate kinase (280 aa).

Substrate is bound by residues 57–58 (GG), R79, and N174.

The protein belongs to the acetylglutamate kinase family. ArgB subfamily.

The protein resides in the cytoplasm. It carries out the reaction N-acetyl-L-glutamate + ATP = N-acetyl-L-glutamyl 5-phosphate + ADP. Its pathway is amino-acid biosynthesis; L-arginine biosynthesis; N(2)-acetyl-L-ornithine from L-glutamate: step 2/4. Catalyzes the ATP-dependent phosphorylation of N-acetyl-L-glutamate. This chain is Acetylglutamate kinase, found in Helicobacter hepaticus (strain ATCC 51449 / 3B1).